Here is a 47-residue protein sequence, read N- to C-terminus: Ruminococcin-A (47 aa).

The signal sequence occupies residues 1-23 (MRNDVLTLTNPMEEKELEQILGG). Threonine 30 and threonine 39 each carry 2,3-didehydrobutyrine. The beta-methyllanthionine (Thr-Cys) cross-link spans 30-35 (TISHEC). Residues 32-46 (SHECNMNTWQFLFTC) constitute a cross-link (lanthionine (Ser-Cys)). The beta-methyllanthionine (Thr-Cys) cross-link spans 45–47 (TCC).

Post-translationally, maturation of lantibiotics involves the enzymatic conversion of Thr, and Ser into dehydrated AA and the formation of thioether bonds with cysteine. This is followed by membrane translocation and cleavage of the modified precursor. In terms of processing, it is not established whether the 2,3-didehydrobutyrine is the E- or Z-isomer.

It is found in the secreted. Its function is as follows. Lanthionine-containing peptide antibiotic (lantibiotic) active on Gram-positive bacteria. The bactericidal activity of lantibiotics is based on depolarization of energized bacterial cytoplasmic membranes, initiated by the formation of aqueous transmembrane pores. Ruminococcin A is a broad spectrum bacteriocin exhibiting activity against a wide range of pathogenic clostridia and B.longum. The polypeptide is Ruminococcin-A (rumA1) (Mediterraneibacter gnavus (Ruminococcus gnavus)).